The primary structure comprises 72 residues: Gas vesicle protein A (72 aa).

Belongs to the gas vesicle GvpA family. The gas vesicle shell is 2 nm thick and consists of a single layer of this protein. It forms helical ribs nearly perpendicular to the long axis of the vesicle.

It localises to the gas vesicle shell. Its function is as follows. Gas vesicles are hollow, gas filled proteinaceous nanostructures found in some microorganisms. During planktonic growth they allow positioning of the organism at a favorable depth for light or nutrient acquisition. GvpA forms the protein shell. The protein is Gas vesicle protein A of Geotalea uraniireducens (strain Rf4) (Geobacter uraniireducens).